A 696-amino-acid chain; its full sequence is MATEFTGVWGRDSITLETGKWAKQAHGSVVYKTGNLVLLATVCAAEEPKEGQDFFPLTCEYTEKAYSVGRFPGGYFKREAKPAEHEVLLSRILDRPIRPMFPEGYFSEVQLLVQVLSADKQVSVQGHAINAASAALSVSSIPFAGPIAGARIGRIGGEFILNPTNEEITKSDLDLVVAGTKDAIVMIEGEASEISKEDMMAALRFAQEQLKFAVAMQEELAKKHGTVKKEVVLKAPDKDLHAKIREFAFDRLTLANKNADKAKRNDDIKAINKETVEHFKTLLAPEDKTKDIKHFLHELEYEVVRELVLGEGIRFDGRKTDEIRQISCEIDVLPGPHGSAVFTRGQTQSLGVMTLGTTSDNQRYETLEGSKEKNFMLHYNFPAFSVGEVRRNSGPGRREIGHGNLAERAIKKVLPTQTEFPYVIRLVSEILESNGSSSMASVCSGTLALMAGGVPISGAVSGIAMGLFSDEKGRFAVLSDIAGIEDHFGDMDFKLAGTKKGITAFQMDLKVNGLGLEVLQKAIEQAEVGRDHILGEMNKAISSVKGNLSENAPRITQKQIPKDRIGELIGPGGKMIRAIIEQSGSEISVDDSGKVTIASPSEESKEKAIAMIDGIFEEIEVGKIYDGVIKRIADFGAFVEILPGKEGLCHISKLDVKRVQSVRDIVSEGDKIKVKVISVDKMGKIDLSRKDVLLDN.

Asp486 and Asp492 together coordinate Mg(2+). Residues 553-612 (PRITQKQIPKDRIGELIGPGGKMIRAIIEQSGSEISVDDSGKVTIASPSEESKEKAIAMI) enclose the KH domain. Residues 622–690 (GKIYDGVIKR…KMGKIDLSRK (69 aa)) enclose the S1 motif domain.

This sequence belongs to the polyribonucleotide nucleotidyltransferase family. Mg(2+) is required as a cofactor.

The protein localises to the cytoplasm. The enzyme catalyses RNA(n+1) + phosphate = RNA(n) + a ribonucleoside 5'-diphosphate. Its function is as follows. Involved in mRNA degradation. Catalyzes the phosphorolysis of single-stranded polyribonucleotides processively in the 3'- to 5'-direction. The polypeptide is Polyribonucleotide nucleotidyltransferase (Leptospira biflexa serovar Patoc (strain Patoc 1 / ATCC 23582 / Paris)).